A 128-amino-acid chain; its full sequence is Putative pre-16S rRNA nuclease (128 aa).

This sequence belongs to the YqgF nuclease family.

Its subcellular location is the cytoplasm. Could be a nuclease involved in processing of the 5'-end of pre-16S rRNA. This is Putative pre-16S rRNA nuclease from Sulfurovum sp. (strain NBC37-1).